Consider the following 215-residue polypeptide: Imidazole glycerol phosphate synthase subunit HisH (215 aa).

The Glutamine amidotransferase type-1 domain maps to 9-215 (EVVLVDYGLG…QNFVDYCLER (207 aa)). C85 serves as the catalytic Nucleophile. Residues H193 and E195 contribute to the active site.

Heterodimer of HisH and HisF.

It localises to the cytoplasm. It carries out the reaction 5-[(5-phospho-1-deoxy-D-ribulos-1-ylimino)methylamino]-1-(5-phospho-beta-D-ribosyl)imidazole-4-carboxamide + L-glutamine = D-erythro-1-(imidazol-4-yl)glycerol 3-phosphate + 5-amino-1-(5-phospho-beta-D-ribosyl)imidazole-4-carboxamide + L-glutamate + H(+). The enzyme catalyses L-glutamine + H2O = L-glutamate + NH4(+). Its pathway is amino-acid biosynthesis; L-histidine biosynthesis; L-histidine from 5-phospho-alpha-D-ribose 1-diphosphate: step 5/9. In terms of biological role, IGPS catalyzes the conversion of PRFAR and glutamine to IGP, AICAR and glutamate. The HisH subunit catalyzes the hydrolysis of glutamine to glutamate and ammonia as part of the synthesis of IGP and AICAR. The resulting ammonia molecule is channeled to the active site of HisF. This is Imidazole glycerol phosphate synthase subunit HisH from Natronomonas pharaonis (strain ATCC 35678 / DSM 2160 / CIP 103997 / JCM 8858 / NBRC 14720 / NCIMB 2260 / Gabara) (Halobacterium pharaonis).